A 154-amino-acid chain; its full sequence is Transcription antitermination protein NusB (154 aa).

Belongs to the NusB family.

Functionally, involved in transcription antitermination. Required for transcription of ribosomal RNA (rRNA) genes. Binds specifically to the boxA antiterminator sequence of the ribosomal RNA (rrn) operons. The polypeptide is Transcription antitermination protein NusB (Desulfosudis oleivorans (strain DSM 6200 / JCM 39069 / Hxd3) (Desulfococcus oleovorans)).